Reading from the N-terminus, the 466-residue chain is Aladin (466 aa).

5 WD repeats span residues 135-174 (WLNS…TTAT), 179-218 (PSQT…HLGR), 229-269 (PNNL…MQPL), 271-310 (RLGP…TTER), and 378-418 (LVGG…FDLQ).

The protein localises to the nucleus. Its subcellular location is the nuclear pore complex. The protein resides in the cytoplasm. It localises to the cytoskeleton. It is found in the spindle. Its function is as follows. Involved in mitotic spindle assembly. The protein is Aladin of Drosophila melanogaster (Fruit fly).